Consider the following 155-residue polypeptide: FHA domain-containing protein FhaB (155 aa).

Residues 6 to 28 (LQLTRAGFLMLLWVFIWSVLRIL) traverse the membrane as a helical segment. The residue at position 36 (Thr-36) is a Phosphothreonine. The FHA domain maps to 83-132 (VLIGRADDSTLVLTDDYASTRHARLSMRGSEWYVEDLGSTNGTYLDRAKV).

Post-translationally, phosphorylated by PknB. Dephosphorylated by PstP.

The protein resides in the cell membrane. This chain is FHA domain-containing protein FhaB (fhaB), found in Mycobacterium tuberculosis (strain CDC 1551 / Oshkosh).